A 92-amino-acid chain; its full sequence is Acylphosphatase (92 aa).

In terms of domain architecture, Acylphosphatase-like spans 5–92 (RAHVVVSGKV…GEFSGFKIAF (88 aa)). Active-site residues include R20 and N38.

The protein belongs to the acylphosphatase family.

It catalyses the reaction an acyl phosphate + H2O = a carboxylate + phosphate + H(+). This is Acylphosphatase (acyP) from Pelotomaculum thermopropionicum (strain DSM 13744 / JCM 10971 / SI).